The following is a 298-amino-acid chain: Serpentine receptor class delta-34 (298 aa).

6 consecutive transmembrane segments (helical) span residues 10–30 (SSIM…FTQV), 54–74 (ACFF…FAIP), 99–119 (MILL…VITY), 158–178 (LATN…IVFI), 207–227 (LTIQ…AHLI), and 242–262 (VLYM…IVTI).

The protein belongs to the nematode receptor-like protein srd family.

The protein localises to the membrane. The protein is Serpentine receptor class delta-34 (srd-34) of Caenorhabditis elegans.